The primary structure comprises 261 residues: Thiazole synthase (261 aa).

Lysine 102 acts as the Schiff-base intermediate with DXP in catalysis. Residues glycine 163, 189 to 190 (AG), and 211 to 212 (NT) each bind 1-deoxy-D-xylulose 5-phosphate.

This sequence belongs to the ThiG family. As to quaternary structure, homotetramer. Forms heterodimers with either ThiH or ThiS.

Its subcellular location is the cytoplasm. The enzyme catalyses [ThiS sulfur-carrier protein]-C-terminal-Gly-aminoethanethioate + 2-iminoacetate + 1-deoxy-D-xylulose 5-phosphate = [ThiS sulfur-carrier protein]-C-terminal Gly-Gly + 2-[(2R,5Z)-2-carboxy-4-methylthiazol-5(2H)-ylidene]ethyl phosphate + 2 H2O + H(+). Its pathway is cofactor biosynthesis; thiamine diphosphate biosynthesis. Functionally, catalyzes the rearrangement of 1-deoxy-D-xylulose 5-phosphate (DXP) to produce the thiazole phosphate moiety of thiamine. Sulfur is provided by the thiocarboxylate moiety of the carrier protein ThiS. In vitro, sulfur can be provided by H(2)S. This chain is Thiazole synthase, found in Acinetobacter baumannii (strain AB307-0294).